The primary structure comprises 392 residues: Nucleosome assembly protein 1-like 1-A (392 aa).

A disordered region spans residues Met-1–Arg-37. Over residues Asp-13–Glu-30 the composition is skewed to acidic residues. The NAP1L motif motif lies at Tyr-126–Ala-150. The Nuclear localization signal motif lies at Ile-273 to His-279. Over residues Ala-346–Asp-377 the composition is skewed to acidic residues. A disordered region spans residues Ala-346 to Gln-392.

This sequence belongs to the nucleosome assembly protein (NAP) family. In terms of assembly, forms homomultimers. Interacts with histone B4. Interacts with the B-type cyclins ccnb1 and ccnb2. In terms of processing, phosphorylated by cyclin B-cdc2 kinase complexes. In terms of tissue distribution, initially expressed throughout the embryo with expression higher at the animal pole. Becomes localized to presumptive ectoderm by gastrula stages. By stage 18 (neurula), expressed in the neural plate and posterior to the cement gland. In late neurula/early tailbud stages, expressed in the neural crest, neural tube, eyes, tailbud and ventral blood islands. Adult expression is predominantly in ovaries.

It localises to the cytoplasm. Its subcellular location is the nucleus. Acts as a chaperone for the linker histone to facilitate deposition of histone B4 onto linker DNA. Required for both remodeling of sperm chromatin into nucleosomes, and linker histone binding to nucleosome core dimers. Plays a role in tissue-specific gene regulation. Required for primitive hemopoiesis, acting upstream of tal1/scl. The protein is Nucleosome assembly protein 1-like 1-A (nap1l1-a) of Xenopus laevis (African clawed frog).